A 2467-amino-acid chain; its full sequence is Transcription factor TFIIIB component B'' homolog (2467 aa).

2 disordered regions span residues M1 to I145 and L159 to G243. An interaction with ZBTB43 region spans residues M1–Y301. The span at A81–S92 shows a compositional bias: low complexity. Residues S99 to L118 are compositionally biased toward polar residues. Composition is skewed to basic and acidic residues over residues A133–R144 and R177–M186. Residues R144 to R177 are a coiled coil. A compositionally biased stretch (acidic residues) spans N231–D242. The region spanning R297–E347 is the Myb-like domain. Residues A357–G472 form a required for phosphorylation by CSNK2A1 region. 16 disordered regions span residues E380–K513, S576–A720, P748–W844, L866–M893, L971–I1200, L1231–A1270, D1318–I1388, L1409–Q1448, K1527–L1561, I1592–K1706, I1902–R1926, I1977–G2014, L2058–P2083, L2179–S2206, G2260–L2290, and L2304–T2449. Residues E458–L487 adopt a coiled-coil conformation. The segment covering A649–M660 has biased composition (basic and acidic residues). A compositionally biased stretch (basic residues) spans R809–I824. Composition is skewed to basic and acidic residues over residues K873 to R884, T992 to T1002, T1009 to M1041, E1089 to T1098, E1112 to S1130, and D1150 to S1170. Composition is skewed to polar residues over residues L1180–I1200, D1251–L1265, D1318–V1330, and P1364–N1382. Composition is skewed to basic and acidic residues over residues Q1429–Q1448, R1536–L1561, and I1592–D1603. Polar residues-rich tracts occupy residues E1621–P1642 and Y1650–S1665. Residues R1688–T1697 show a composition bias toward basic residues. Composition is skewed to basic and acidic residues over residues I1902–A1913, I1977–H1996, and A2068–K2078. Over residues P2185–P2199 the composition is skewed to low complexity. Polar residues-rich tracts occupy residues F2262–K2273, P2319–K2334, and T2414–Q2429.

Component of TFIIIB complex. The TFIIIB complex has two activities, alpha and beta. The TFIIIB-alpha and TFIIIB-beta activities are required for transcription of genes with TFIIIC-bound internal promoters and PSE transcription factor-bound external promoters, respectively. The TFIIIB-alpha activity complex is composed of TBP, BDP1, and a complex containing both BRF2 and at least four stably associated proteins; YY1 facilitates the formation of TFIIIB-alpha activity complex. The TFIIIB-beta activity complex is composed of TBP, BDP1, and BRF1. Interacts with BRF1; this interaction diminishes during mitosis resulting in the release of BDP1 from chromosomal templates. Component of TFIIIC complex. The TFIIIC complex has two activities, C1 and C2. The TFIIIC2 activity complex is only required for transcription of the 'classical' pol III genes whereas the TFIIIC1 activity complex is required for transcription of all pol III genes. The TFIIIC1 activity complex is composed at least of BDP1. Interacts with ZBTB43. In terms of processing, phosphorylated by CSNK2A1 during mitosis, resulting in its release from chromatin and suppression of polymerase III transcription. In terms of tissue distribution, expressed in the cochlea, particularly in the spiral ligament, the capillaries of the stria vascularis and the basilar membrane.

The protein resides in the nucleus. General activator of RNA polymerase III transcription. Requires for transcription from all three types of polymerase III promoters. Requires for transcription of genes with internal promoter elements and with promoter elements upstream of the initiation site. The protein is Transcription factor TFIIIB component B'' homolog (Bdp1) of Mus musculus (Mouse).